Consider the following 323-residue polypeptide: tRNA U34 carboxymethyltransferase (323 aa).

Carboxy-S-adenosyl-L-methionine is bound by residues K91, W105, K110, G130, 180–181 (IE), M196, Y200, and R315.

Belongs to the class I-like SAM-binding methyltransferase superfamily. CmoB family. Homotetramer.

It catalyses the reaction carboxy-S-adenosyl-L-methionine + 5-hydroxyuridine(34) in tRNA = 5-carboxymethoxyuridine(34) in tRNA + S-adenosyl-L-homocysteine + H(+). Its function is as follows. Catalyzes carboxymethyl transfer from carboxy-S-adenosyl-L-methionine (Cx-SAM) to 5-hydroxyuridine (ho5U) to form 5-carboxymethoxyuridine (cmo5U) at position 34 in tRNAs. The protein is tRNA U34 carboxymethyltransferase of Citrifermentans bemidjiense (strain ATCC BAA-1014 / DSM 16622 / JCM 12645 / Bem) (Geobacter bemidjiensis).